Reading from the N-terminus, the 117-residue chain is Large ribosomal subunit protein bL19 (117 aa).

This sequence belongs to the bacterial ribosomal protein bL19 family.

Functionally, this protein is located at the 30S-50S ribosomal subunit interface and may play a role in the structure and function of the aminoacyl-tRNA binding site. In Christiangramia forsetii (strain DSM 17595 / CGMCC 1.15422 / KT0803) (Gramella forsetii), this protein is Large ribosomal subunit protein bL19.